The following is a 600-amino-acid chain: DNA ligase (600 aa).

ATP is bound at residue Asp258. Lys260 (N6-AMP-lysine intermediate) is an active-site residue. ATP-binding residues include Arg265, Arg280, Glu310, Phe350, Arg427, and Lys433.

This sequence belongs to the ATP-dependent DNA ligase family. Mg(2+) serves as cofactor.

It catalyses the reaction ATP + (deoxyribonucleotide)n-3'-hydroxyl + 5'-phospho-(deoxyribonucleotide)m = (deoxyribonucleotide)n+m + AMP + diphosphate.. Inhibited by PCNA123 and PCNA323. Functionally, DNA ligase that seals nicks in double-stranded DNA during DNA replication, DNA recombination and DNA repair. This Sulfurisphaera tokodaii (strain DSM 16993 / JCM 10545 / NBRC 100140 / 7) (Sulfolobus tokodaii) protein is DNA ligase.